We begin with the raw amino-acid sequence, 163 residues long: Nucleotide-binding protein Pnap_1080 (163 aa).

It belongs to the YajQ family.

In terms of biological role, nucleotide-binding protein. This chain is Nucleotide-binding protein Pnap_1080, found in Polaromonas naphthalenivorans (strain CJ2).